We begin with the raw amino-acid sequence, 160 residues long: SsrA-binding protein (160 aa).

Positions 136–160 (KRDTMRERDSNRELQRAVRNKGKED) are disordered.

It belongs to the SmpB family.

The protein resides in the cytoplasm. In terms of biological role, required for rescue of stalled ribosomes mediated by trans-translation. Binds to transfer-messenger RNA (tmRNA), required for stable association of tmRNA with ribosomes. tmRNA and SmpB together mimic tRNA shape, replacing the anticodon stem-loop with SmpB. tmRNA is encoded by the ssrA gene; the 2 termini fold to resemble tRNA(Ala) and it encodes a 'tag peptide', a short internal open reading frame. During trans-translation Ala-aminoacylated tmRNA acts like a tRNA, entering the A-site of stalled ribosomes, displacing the stalled mRNA. The ribosome then switches to translate the ORF on the tmRNA; the nascent peptide is terminated with the 'tag peptide' encoded by the tmRNA and targeted for degradation. The ribosome is freed to recommence translation, which seems to be the essential function of trans-translation. The chain is SsrA-binding protein from Pseudomonas putida (strain GB-1).